The chain runs to 140 residues: MAIHYETKATNVGGRKGHVYTDDRALDIDIVPPAQADGKATNPEQLFAAGYASCFNGAFDLILKQNKVRDAHPEVTLTVRLEDDSDSESPKLSVSIDATIKNVISQEEAEKYLQMAHEFCPYSKATQGNINVDLNVNVVD.

Belongs to the OsmC/Ohr family.

The protein is Organic hydroperoxide resistance protein-like of Staphylococcus aureus (strain USA300).